Reading from the N-terminus, the 206-residue chain is Small ribosomal subunit protein uS4 (206 aa).

An S4 RNA-binding domain is found at 96–156 (CRLDNVVYRM…EKSLNQLRIV (61 aa)).

The protein belongs to the universal ribosomal protein uS4 family. Part of the 30S ribosomal subunit. Contacts protein S5. The interaction surface between S4 and S5 is involved in control of translational fidelity.

Its function is as follows. One of the primary rRNA binding proteins, it binds directly to 16S rRNA where it nucleates assembly of the body of the 30S subunit. With S5 and S12 plays an important role in translational accuracy. The protein is Small ribosomal subunit protein uS4 of Pseudomonas entomophila (strain L48).